The sequence spans 71 residues: Large ribosomal subunit protein uL29 (71 aa).

Belongs to the universal ribosomal protein uL29 family.

The sequence is that of Large ribosomal subunit protein uL29 from Methanococcus maripaludis (strain C7 / ATCC BAA-1331).